A 212-amino-acid polypeptide reads, in one-letter code: HTH-type transcriptional regulator RutR (212 aa).

The HTH tetR-type domain occupies 17 to 77 (SAKKKAILSA…AVLRQILDIW (61 aa)). The H-T-H motif DNA-binding region spans 39–58 (TRLEQIAELAGVSKTNLLYY).

As to quaternary structure, homodimer.

Functionally, master transcription regulator which represses the degradation of pyrimidines (rutABCDEFG) and purines (gcl operon) for maintenance of metabolic balance between pyrimidines and purines. It also regulates the synthesis of pyrimidine nucleotides and arginine from glutamine (carAB) and the supply of glutamate (gadABWX). In Escherichia coli O157:H7, this protein is HTH-type transcriptional regulator RutR (rutR).